Consider the following 260-residue polypeptide: Phosphate import ATP-binding protein PstB 1 (260 aa).

Residues 8–255 form the ABC transporter domain; it reads TETKNVYDVL…PEHKRTEDYV (248 aa). 46-53 lines the ATP pocket; it reads GPSGCGKS.

It belongs to the ABC transporter superfamily. Phosphate importer (TC 3.A.1.7) family. In terms of assembly, the complex is composed of two ATP-binding proteins (PstB), two transmembrane proteins (PstC and PstA) and a solute-binding protein (PstS).

It is found in the cell membrane. It catalyses the reaction phosphate(out) + ATP + H2O = ADP + 2 phosphate(in) + H(+). Its function is as follows. Part of the ABC transporter complex PstSACB involved in phosphate import. Responsible for energy coupling to the transport system. The polypeptide is Phosphate import ATP-binding protein PstB 1 (Shouchella clausii (strain KSM-K16) (Alkalihalobacillus clausii)).